Here is a 417-residue protein sequence, read N- to C-terminus: Serine hydroxymethyltransferase (417 aa).

(6S)-5,6,7,8-tetrahydrofolate is bound by residues L121 and 125–127 (GHL). K229 carries the N6-(pyridoxal phosphate)lysine modification. 355 to 357 (SPF) lines the (6S)-5,6,7,8-tetrahydrofolate pocket.

The protein belongs to the SHMT family. Homodimer. Requires pyridoxal 5'-phosphate as cofactor.

It is found in the cytoplasm. It catalyses the reaction (6R)-5,10-methylene-5,6,7,8-tetrahydrofolate + glycine + H2O = (6S)-5,6,7,8-tetrahydrofolate + L-serine. It participates in one-carbon metabolism; tetrahydrofolate interconversion. It functions in the pathway amino-acid biosynthesis; glycine biosynthesis; glycine from L-serine: step 1/1. Catalyzes the reversible interconversion of serine and glycine with tetrahydrofolate (THF) serving as the one-carbon carrier. This reaction serves as the major source of one-carbon groups required for the biosynthesis of purines, thymidylate, methionine, and other important biomolecules. Also exhibits THF-independent aldolase activity toward beta-hydroxyamino acids, producing glycine and aldehydes, via a retro-aldol mechanism. This chain is Serine hydroxymethyltransferase, found in Erwinia tasmaniensis (strain DSM 17950 / CFBP 7177 / CIP 109463 / NCPPB 4357 / Et1/99).